Here is a 138-residue protein sequence, read N- to C-terminus: Basic phospholipase A2 sistruxin B (138 aa).

The first 16 residues, 1–16 (MRALWIVAVLLVGVEG), serve as a signal peptide directing secretion. 7 disulfide bridges follow: Cys42–Cys131, Cys44–Cys60, Cys59–Cys111, Cys65–Cys138, Cys66–Cys104, Cys73–Cys97, and Cys91–Cys102. Tyr43, Gly45, and Gly47 together coordinate Ca(2+). Residue His63 is part of the active site. Asp64 serves as a coordination point for Ca(2+). Asp105 is a catalytic residue.

In terms of assembly, heterodimer of an acidic subunit and a basic chain. The acidic subunit is non-toxic, without enzymatic activity and comprises 3 peptides that are cross-linked by 7 disulfide bridges. The basic subunit is toxic, has phospholipase A2 activity and is composed of a single chain. It depends on Ca(2+) as a cofactor. Expressed by the venom gland.

The protein resides in the secreted. The catalysed reaction is a 1,2-diacyl-sn-glycero-3-phosphocholine + H2O = a 1-acyl-sn-glycero-3-phosphocholine + a fatty acid + H(+). In terms of biological role, snake venom phospholipase A2 (PLA2) that shows presynaptic neurotoxicity. PLA2 catalyzes the calcium-dependent hydrolysis of the 2-acyl groups in 3-sn-phosphoglycerides. The chain is Basic phospholipase A2 sistruxin B from Sistrurus tergeminus (Western massasauga).